The chain runs to 116 residues: MAGKELERCQRQADEVTEIMLNNFDKVLERDGKLAELEQRSDQLLDMSSAFSKTTKTLAQKKRWENARCRIYMGLAVGIALLILLIVLLVIFLPQSSKGSSAPQVQDAGPASGPGE.

Over 1 to 72 the chain is Cytoplasmic; the sequence is MAGKELERCQ…RWENARCRIY (72 aa). The v-SNARE coiled-coil homology domain occupies 5 to 65; sequence ELERCQRQAD…KTLAQKKRWE (61 aa). 3 positions are modified to phosphoserine: Ser41, Ser48, and Ser49. The helical; Anchor for type IV membrane protein transmembrane segment at 73-93 threads the bilayer; the sequence is MGLAVGIALLILLIVLLVIFL. Topologically, residues 94-116 are vesicular; it reads PQSSKGSSAPQVQDAGPASGPGE. A disordered region spans residues 97–116; that stretch reads SKGSSAPQVQDAGPASGPGE.

It belongs to the synaptobrevin family.

The protein localises to the cell membrane. It localises to the endomembrane system. The protein resides in the golgi apparatus. Its subcellular location is the trans-Golgi network membrane. Functionally, may participate in trafficking events that are associated with myogenesis, such as myoblast fusion and/or GLUT4 trafficking. This chain is Vesicle-associated membrane protein 5 (VAMP5), found in Bos taurus (Bovine).